The primary structure comprises 375 residues: uncharacterized protein (375 aa).

A Radical SAM core domain is found at 78-302; the sequence is KKIEITSTIH…IFPNIRITSP (225 aa). Residues cysteine 92, cysteine 98, and cysteine 101 each contribute to the [4Fe-4S] cluster site.

It depends on [4Fe-4S] cluster as a cofactor.

This is an uncharacterized protein from Methanocaldococcus jannaschii (strain ATCC 43067 / DSM 2661 / JAL-1 / JCM 10045 / NBRC 100440) (Methanococcus jannaschii).